A 424-amino-acid chain; its full sequence is UPF0229 protein Sde_0732 (424 aa).

The segment at 52 to 109 is disordered; sequence IGIPSKDISEPVFHHDSGGVDTRVLPGNDQFHSGDRIQRPPSGQGGGGSGKGASDSGE. The span at 58 to 69 shows a compositional bias: basic and acidic residues; the sequence is DISEPVFHHDSG.

It belongs to the UPF0229 family.

This is UPF0229 protein Sde_0732 from Saccharophagus degradans (strain 2-40 / ATCC 43961 / DSM 17024).